A 109-amino-acid chain; its full sequence is Nucleoid-associated protein A1S_1684 (109 aa).

This sequence belongs to the YbaB/EbfC family. Homodimer.

It is found in the cytoplasm. The protein resides in the nucleoid. In terms of biological role, binds to DNA and alters its conformation. May be involved in regulation of gene expression, nucleoid organization and DNA protection. In Acinetobacter baumannii (strain ATCC 17978 / DSM 105126 / CIP 53.77 / LMG 1025 / NCDC KC755 / 5377), this protein is Nucleoid-associated protein A1S_1684.